Here is a 609-residue protein sequence, read N- to C-terminus: Zinc metalloproteinase-disintegrin-like VAP2B (609 aa).

Positions 1–20 (MIQVLLVTICLAAFPYQGSS) are cleaved as a signal peptide. The propeptide occupies 21 to 189 (IILESGNVND…KKASQLVVTA (169 aa)). A Pyrrolidone carboxylic acid (Glu) modification is found at Glu190. Positions 198–393 (RFVELFLVVD…HNPECILNEP (196 aa)) constitute a Peptidase M12B domain. Ca(2+) contacts are provided by Glu201 and Asp285. Intrachain disulfides connect Cys308-Cys388, Cys348-Cys372, and Cys350-Cys355. His333 lines the Zn(2+) pocket. Glu334 is a catalytic residue. Zn(2+) is bound by residues His337 and His343. The N-linked (GlcNAc...) asparagine glycan is linked to Asn371. Ca(2+) is bound by residues Cys388, Asn391, Val403, Asn406, Leu408, Glu410, Glu413, and Asp416. Residues 401 to 487 (PPVCGNELLE…ECPADVFHKN (87 aa)) enclose the Disintegrin domain. 22 cysteine pairs are disulfide-bonded: Cys404/Cys423, Cys404/Cys433, Cys415/Cys428, Cys415/Cys433, Cys417/Cys423, Cys427/Cys450, Cys441/Cys447, Cys446/Cys472, Cys459/Cys479, Cys466/Cys491, Cys466/Cys498, Cys491/Cys503, Cys498/Cys503, Cys510/Cys525, Cys510/Cys560, Cys525/Cys571, Cys538/Cys548, Cys548/Cys555, Cys555/Cys597, Cys560/Cys571, Cys591/Cys602, and Cys597/Cys602. The segment at 459-472 (CRASMSECDPAEHC) is inhibits platelet aggregation. Positions 465-467 (ECD) match the D/ECD-tripeptide motif. Positions 467, 468, 470, 482, and 483 each coordinate Ca(2+).

The protein belongs to the venom metalloproteinase (M12B) family. P-III subfamily. P-IIIb sub-subfamily. Monomer or heterodimer; non-covalently linked. Interacts with fibrillar collagen. The cofactor is Zn(2+). In terms of processing, the N-terminus is blocked. Expressed by the venom gland.

It is found in the secreted. Functionally, zinc metalloprotease that abolishes platelet aggregation induced by collagen, but has no effect on platelet aggregation induced by ADP or thromboxane analog. This inhibition may be due to its ability to bind collagen and block the binding site on collagen for platelets and/or to its ability to bind to the platelet alpha-2/beta-1 collagen receptor (ITGA2/ITGB1) to block its interaction with collagen and hence prevent platelet stimulation. In terms of biological role, abolishes platelet aggregation induced by collagen (IC(50)=66 nM) but not ADP-stimulated platelet aggregation. This inhibition may be due to its ability to bind collagen and block the binding site on collagen for platelets and/or to its ability to bind to the platelet alpha-2/beta-1 collagen receptor (ITGA2/ITGB1) to block its interaction with collagen and hence prevent platelet stimulation. This Crotalus atrox (Western diamondback rattlesnake) protein is Zinc metalloproteinase-disintegrin-like VAP2B.